The following is a 210-amino-acid chain: Na(+)-translocating NADH-quinone reductase subunit D (210 aa).

5 helical membrane passes run F42–I62, I72–A92, V103–M123, L131–F151, and N178–I198.

It belongs to the NqrDE/RnfAE family. As to quaternary structure, composed of six subunits; NqrA, NqrB, NqrC, NqrD, NqrE and NqrF.

The protein localises to the cell inner membrane. The catalysed reaction is a ubiquinone + n Na(+)(in) + NADH + H(+) = a ubiquinol + n Na(+)(out) + NAD(+). Its activity is regulated as follows. This reaction is tightly coupled to the Na(+) pumping activity and specifically requires Na(+) for activity. Inhibited by korormicin and 2-N-heptyl-4-hydroxyquinoline N-oxide (HQNO). Functionally, NQR complex catalyzes the reduction of ubiquinone-1 to ubiquinol by two successive reactions, coupled with the transport of Na(+) ions from the cytoplasm to the periplasm. NqrA to NqrE are probably involved in the second step, the conversion of ubisemiquinone to ubiquinol. The protein is Na(+)-translocating NADH-quinone reductase subunit D of Vibrio alginolyticus.